We begin with the raw amino-acid sequence, 99 residues long: Protein S100-A11 (99 aa).

Residue M1 is modified to N-acetylmethionine. A Phosphothreonine modification is found at T8. EF-hand domains follow at residues 10–47 (RCIE…ELAA) and 53–88 (KDPG…LAIA). Residues N29, K31, E36, D66, D68, D70, Q72, and E77 each contribute to the Ca(2+) site.

This sequence belongs to the S-100 family. In terms of assembly, homodimer; disulfide-linked. Phosphorylation at Thr-8 significantly suppresses homodimerization and promotes association with NCL/nucleolin which induces nuclear translocation.

It localises to the cytoplasm. The protein localises to the nucleus. Functionally, facilitates the differentiation and the cornification of keratinocytes. The protein is Protein S100-A11 (S100A11) of Sus scrofa (Pig).